A 150-amino-acid polypeptide reads, in one-letter code: Snaclec bothrojaracin subunit beta (150 aa).

The signal sequence occupies residues 1–23 (MGRFIFVSFGLLVVFLSLSGTAA). 3 cysteine pairs are disulfide-bonded: Cys25-Cys36, Cys53-Cys146, and Cys123-Cys138. In terms of domain architecture, C-type lectin spans 32–147 (YEGSCYRVFE…CTKLEYFVCE (116 aa)).

Belongs to the snaclec family. As to quaternary structure, heterodimer of subunits alpha and beta; disulfide-linked. In terms of tissue distribution, expressed by the venom gland.

It is found in the secreted. This potent antithrombotic agent acts in a calcium-independent manner. Exerts its anticoagulant effect by two distinct mechanisms. It binds to activated thrombin through exosite 1, blocking fibrinogen clotting, platelet activation, factor V activation and other effects, and it interacts with prothrombin (F2), decreasing its proteolytic activation -especially in the presence of factor Va. In vivo, intravenous injection before thrombosis induction causes a significant decrease in thrombus weight. Furthermore, BJC shows a prolonged effect by remaining in the plasma bound to prothrombin for at least 12 hours. This Bothrops jararaca (Jararaca) protein is Snaclec bothrojaracin subunit beta.